We begin with the raw amino-acid sequence, 334 residues long: 4-hydroxyproline 2-epimerase (334 aa).

Residue cysteine 90 is the Proton acceptor of the active site. Residues 91-92 (GH), histidine 223, and aspartate 249 each bind substrate. Cysteine 253 functions as the Proton donor in the catalytic mechanism. Residue 254–255 (GT) participates in substrate binding.

This sequence belongs to the proline racemase family. Homodimer.

It catalyses the reaction trans-4-hydroxy-L-proline = cis-4-hydroxy-D-proline. Catalyzes the epimerization of trans-4-hydroxy-L-proline (t4LHyp) to cis-4-hydroxy-D-proline (c4DHyp). Is likely involved in a degradation pathway that converts t4LHyp to alpha-ketoglutarate, which would allow P.denitrificans to grow on t4LHyp as a sole carbon source. Also seems to be involved in an alternative catabolic pathway that degrades trans-4-hydroxy-L-proline betaine (tHyp-B) to alpha-ketoglutarate; this pathway would permit the utilization of tHyp-B as a sole carbon and nitrogen source. This Paracoccus denitrificans (strain Pd 1222) protein is 4-hydroxyproline 2-epimerase (hypF).